Consider the following 729-residue polypeptide: Subtilisin-like protease SBT4.3 (729 aa).

The first 23 residues, 1 to 23 (MAKLSTPLYLICLAFIFTRDVSA), serve as a signal peptide directing secretion. A propeptide spans 24-109 (NDYRQASSVY…VFPSKSHELT (86 aa)) (activation peptide). An Inhibitor I9 domain is found at 32-108 (VYIVYMGTLP…SVFPSKSHEL (77 aa)). Asparagine 82 carries N-linked (GlcNAc...) asparagine glycosylation. Residues 113–580 (SWDFVGFGEK…SGQINPTKAS (468 aa)) enclose the Peptidase S8 domain. Catalysis depends on charge relay system residues aspartate 139 and histidine 196. N-linked (GlcNAc...) asparagine glycans are attached at residues asparagine 275, asparagine 348, asparagine 359, and asparagine 363. The 87-residue stretch at 350-436 (TKFPIVYGQN…LGFEDYKSIK (87 aa)) folds into the PA domain. Catalysis depends on serine 521, which acts as the Charge relay system. N-linked (GlcNAc...) asparagine glycosylation is found at asparagine 614, asparagine 642, and asparagine 656.

The protein belongs to the peptidase S8 family. The C-terminal propeptide is autocleaved.

It is found in the secreted. The polypeptide is Subtilisin-like protease SBT4.3 (Arabidopsis thaliana (Mouse-ear cress)).